The following is a 333-amino-acid chain: Probable tRNA pseudouridine synthase B (333 aa).

The Nucleophile role is filled by D66. The region spanning 233–308 is the PUA domain; the sequence is LKKIIVKDSA…EVVEITRVIM (76 aa).

This sequence belongs to the pseudouridine synthase TruB family. Type 2 subfamily.

The enzyme catalyses uridine(55) in tRNA = pseudouridine(55) in tRNA. Functionally, could be responsible for synthesis of pseudouridine from uracil-55 in the psi GC loop of transfer RNAs. The sequence is that of Probable tRNA pseudouridine synthase B from Methanococcus maripaludis (strain C7 / ATCC BAA-1331).